The following is a 168-amino-acid chain: Nicotinamide-nucleotide adenylyltransferase (168 aa).

Belongs to the archaeal NMN adenylyltransferase family.

The protein localises to the cytoplasm. It catalyses the reaction beta-nicotinamide D-ribonucleotide + ATP + H(+) = diphosphate + NAD(+). It functions in the pathway cofactor biosynthesis; NAD(+) biosynthesis; NAD(+) from nicotinamide D-ribonucleotide: step 1/1. The chain is Nicotinamide-nucleotide adenylyltransferase from Methanosphaerula palustris (strain ATCC BAA-1556 / DSM 19958 / E1-9c).